Here is a 426-residue protein sequence, read N- to C-terminus: Trophoblast glycoprotein (426 aa).

The first 31 residues, 1 to 31, serve as a signal peptide directing secretion; it reads MPGAGSRGPSAGDGRLRLARLALVLLGWVSA. The Extracellular portion of the chain corresponds to 32–361; the sequence is SAPSSSLPSS…ATLPQSLQTS (330 aa). Low complexity predominate over residues 34-51; sequence PSSSLPSSSTSPAAFLAS. Residues 34–54 form a disordered region; it reads PSSSLPSSSTSPAAFLASGSA. In terms of domain architecture, LRRNT spans 53–91; sequence SAQPPPAERCPAACECSEAARTVKCVNRNLLEVPADLPP. Intrachain disulfides connect Cys62–Cys68 and Cys66–Cys77. LRR repeat units lie at residues 92–113, 116–139, and 141–163; these read YVRN…AFAR, PLAD…GAFE, and LPGL…FTFA. A glycan (N-linked (GlcNAc...) asparagine) is linked at Asn124. A glycan (N-linked (GlcNAc...) asparagine) is linked at Asn166. LRR repeat units lie at residues 172-210, 215-238, 239-261, and 262-281; these read PSPL…AALR, LRGL…LLDQ, LPSL…ASFR, and NLTH…VLHN. The N-linked (GlcNAc...) asparagine glycan is linked to Asn281. The region spanning 289 to 352 is the LRRCT domain; the sequence is GLAHVRVFLD…LTSSDLDCDA (64 aa). 2 disulfide bridges follow: Cys304–Cys329 and Cys306–Cys350. A helical transmembrane segment spans residues 362-382; sequence YVFLGIVLALIGAIFLLVLYL. At 383–426 the chain is on the cytoplasmic side; sequence NRKGIKKWMHNIRDACRDHMEGYHYRYEINADPRLTNLSSNSDV. Ser424 carries the phosphoserine modification.

Highly glycosylated.

The protein resides in the cell membrane. May function as an inhibitor of Wnt/beta-catenin signaling by indirectly interacting with LRP6 and blocking Wnt3a-dependent LRP6 internalization. This Rattus norvegicus (Rat) protein is Trophoblast glycoprotein (Tpbg).